A 252-amino-acid polypeptide reads, in one-letter code: Transcriptional regulatory protein HptR (252 aa).

In terms of domain architecture, Response regulatory spans 3-118; the sequence is KVVICDDERI…QLEVILGRLV (116 aa). Asp55 is subject to 4-aspartylphosphate. Positions 153-250 constitute an HTH araC/xylS-type domain; that stretch reads NQIVDQIKQS…QMAPSDYCKQ (98 aa). 2 DNA-binding regions (H-T-H motif) span residues 170–191 and 217–240; these read SDLI…KDHV and HYEI…KKYL.

Post-translationally, phosphorylated by HptS.

It is found in the cytoplasm. Member of the two-component regulatory system HptS/HptR that regulates genes involved in hexose phosphate transport system in response to changes in extracellular phosphate sources. Activates uhpT expression to facilitate glucose-6-phosphate/G6P utilization by directly binding to its promoter. Antagonizes CcpA-dependent transcription of a subset of CcpA-regulated genes involved in antibiotic susceptibility. This Staphylococcus aureus (strain bovine RF122 / ET3-1) protein is Transcriptional regulatory protein HptR (hptR).